We begin with the raw amino-acid sequence, 428 residues long: Cytochrome c biogenesis protein CcsB (428 aa).

3 consecutive transmembrane segments (helical) span residues 14-34, 72-92, and 162-182; these read LRFA…GTFI, SIWF…CSFR, and IGPL…AYGS.

Belongs to the Ccs1/CcsB family. May interact with CcsA.

Its subcellular location is the cellular thylakoid membrane. Its function is as follows. Required during biogenesis of c-type cytochromes (cytochrome c6 and cytochrome f) at the step of heme attachment. The polypeptide is Cytochrome c biogenesis protein CcsB (Prochlorococcus marinus (strain MIT 9312)).